The following is a 242-amino-acid chain: Ribose-5-phosphate isomerase A (242 aa).

Residues 39–42 (SGST), 95–98 (DGAD), and 108–111 (KGGG) each bind substrate. Glutamate 117 acts as the Proton acceptor in catalysis. Position 135 (lysine 135) interacts with substrate.

The protein belongs to the ribose 5-phosphate isomerase family. As to quaternary structure, homodimer.

It carries out the reaction aldehydo-D-ribose 5-phosphate = D-ribulose 5-phosphate. Its pathway is carbohydrate degradation; pentose phosphate pathway; D-ribose 5-phosphate from D-ribulose 5-phosphate (non-oxidative stage): step 1/1. Its function is as follows. Catalyzes the reversible conversion of ribose-5-phosphate to ribulose 5-phosphate. In Chlamydia trachomatis serovar A (strain ATCC VR-571B / DSM 19440 / HAR-13), this protein is Ribose-5-phosphate isomerase A.